Reading from the N-terminus, the 432-residue chain is Trigger factor (432 aa).

Residues 161 to 246 (EDRVTIDFSG…LKKVEERELP (86 aa)) form the PPIase FKBP-type domain.

The protein belongs to the FKBP-type PPIase family. Tig subfamily.

Its subcellular location is the cytoplasm. It carries out the reaction [protein]-peptidylproline (omega=180) = [protein]-peptidylproline (omega=0). Involved in protein export. Acts as a chaperone by maintaining the newly synthesized protein in an open conformation. Functions as a peptidyl-prolyl cis-trans isomerase. This chain is Trigger factor, found in Enterobacter sp. (strain 638).